Reading from the N-terminus, the 257-residue chain is Thiazole synthase (257 aa).

Catalysis depends on Lys-100, which acts as the Schiff-base intermediate with DXP. 1-deoxy-D-xylulose 5-phosphate is bound by residues Gly-161, 187 to 188, and 209 to 210; these read AG and NT.

It belongs to the ThiG family. As to quaternary structure, homotetramer. Forms heterodimers with either ThiH or ThiS.

The protein resides in the cytoplasm. It carries out the reaction [ThiS sulfur-carrier protein]-C-terminal-Gly-aminoethanethioate + 2-iminoacetate + 1-deoxy-D-xylulose 5-phosphate = [ThiS sulfur-carrier protein]-C-terminal Gly-Gly + 2-[(2R,5Z)-2-carboxy-4-methylthiazol-5(2H)-ylidene]ethyl phosphate + 2 H2O + H(+). The protein operates within cofactor biosynthesis; thiamine diphosphate biosynthesis. Functionally, catalyzes the rearrangement of 1-deoxy-D-xylulose 5-phosphate (DXP) to produce the thiazole phosphate moiety of thiamine. Sulfur is provided by the thiocarboxylate moiety of the carrier protein ThiS. In vitro, sulfur can be provided by H(2)S. This is Thiazole synthase from Zymomonas mobilis subsp. mobilis (strain ATCC 31821 / ZM4 / CP4).